The following is a 432-amino-acid chain: Septin-11 (432 aa).

An N-acetylalanine modification is found at Ala-2. Phosphoserine is present on Ser-9. A Septin-type G domain is found at 38 to 304 (QGFCFNILCV…ELYRRCKLEE (267 aa)). Residues 48–55 (GETGIGKS) are G1 motif. GTP is bound by residues 48–55 (GETGIGKS), Gly-103, 184–192 (KADTIAKNE), Gly-238, and Arg-253. The G3 motif stretch occupies residues 100–103 (DTVG). A G4 motif region spans residues 183–186 (AKAD). Residues 320–413 (QETYEAKRNE…LLQSQAQQSG (94 aa)) are a coiled coil. Residues 403 to 416 (QLLQSQAQQSGAQQ) show a composition bias toward low complexity. A disordered region spans residues 403–432 (QLLQSQAQQSGAQQTKKDKDKKNSPWLCTE).

It belongs to the TRAFAC class TrmE-Era-EngA-EngB-Septin-like GTPase superfamily. Septin GTPase family. Septins polymerize into heterooligomeric protein complexes that form filaments, and can associate with cellular membranes, actin filaments and microtubules. Forms homooligomers. GTPase activity is required for filament formation. Interacts with SEPTIN7, SEPTIN9 and SEPTIN12.

Its subcellular location is the cytoplasm. It is found in the cytoskeleton. The protein resides in the synapse. The protein localises to the cell projection. It localises to the dendritic spine. Its subcellular location is the axon. Filament-forming cytoskeletal GTPase. May play a role in cytokinesis (Potential). May play a role in the cytoarchitecture of neurons, including dendritic arborization and dendritic spines, and in GABAergic synaptic connectivity. This Macaca fascicularis (Crab-eating macaque) protein is Septin-11.